Consider the following 313-residue polypeptide: Thymidylate synthase (313 aa).

The disordered stretch occupies residues 1-28 (MPVAGSELPRRPLPPAAQERDAEPRPPH). Positions 18–28 (QERDAEPRPPH) are enriched in basic and acidic residues. Arginine 50 lines the dUMP pocket. Serine 114 is subject to Phosphoserine. Residues 175 to 176 (RR), 195 to 196 (CH), 215 to 218 (RSGD), asparagine 226, and 256 to 258 (HIY) contribute to the dUMP site. Residue cysteine 195 is the Nucleophile of the active site. Aspartate 218 contacts (6R)-5,10-methylene-5,6,7,8-tetrahydrofolate. Residues lysine 287, lysine 292, and lysine 308 each participate in a glycyl lysine isopeptide (Lys-Gly) (interchain with G-Cter in SUMO2) cross-link. Alanine 312 contributes to the (6R)-5,10-methylene-5,6,7,8-tetrahydrofolate binding site.

Belongs to the thymidylate synthase family. Homodimer.

Its subcellular location is the nucleus. The protein localises to the cytoplasm. It localises to the mitochondrion. It is found in the mitochondrion matrix. The protein resides in the mitochondrion inner membrane. The enzyme catalyses dUMP + (6R)-5,10-methylene-5,6,7,8-tetrahydrofolate = 7,8-dihydrofolate + dTMP. The protein operates within pyrimidine metabolism; dTTP biosynthesis. Its function is as follows. Catalyzes the reductive methylation of 2'-deoxyuridine 5'-monophosphate (dUMP) to thymidine 5'-monophosphate (dTMP), using the cosubstrate, 5,10- methylenetetrahydrofolate (CH2H4folate) as a 1-carbon donor and reductant and contributes to the de novo mitochondrial thymidylate biosynthesis pathway. The sequence is that of Thymidylate synthase from Homo sapiens (Human).